The sequence spans 331 residues: D-alanine--D-alanine ligase (331 aa).

An ATP-grasp domain is found at K122–E328. Residue A152–E207 participates in ATP binding. The Mg(2+) site is built by D282, E295, and N297.

It belongs to the D-alanine--D-alanine ligase family. It depends on Mg(2+) as a cofactor. Mn(2+) serves as cofactor.

It localises to the cytoplasm. The enzyme catalyses 2 D-alanine + ATP = D-alanyl-D-alanine + ADP + phosphate + H(+). It participates in cell wall biogenesis; peptidoglycan biosynthesis. Its function is as follows. Cell wall formation. This is D-alanine--D-alanine ligase from Vibrio vulnificus (strain YJ016).